A 433-amino-acid polypeptide reads, in one-letter code: 23S rRNA (uracil(1939)-C(5))-methyltransferase RlmD (433 aa).

Positions Met-1–Arg-53 constitute a TRAM domain. [4Fe-4S] cluster contacts are provided by Cys-66, Cys-72, Cys-75, and Cys-154. Positions 263, 292, 297, 313, 341, and 362 each coordinate S-adenosyl-L-methionine. Cys-389 acts as the Nucleophile in catalysis.

Belongs to the class I-like SAM-binding methyltransferase superfamily. RNA M5U methyltransferase family. RlmD subfamily.

It carries out the reaction uridine(1939) in 23S rRNA + S-adenosyl-L-methionine = 5-methyluridine(1939) in 23S rRNA + S-adenosyl-L-homocysteine + H(+). Catalyzes the formation of 5-methyl-uridine at position 1939 (m5U1939) in 23S rRNA. In Aromatoleum aromaticum (strain DSM 19018 / LMG 30748 / EbN1) (Azoarcus sp. (strain EbN1)), this protein is 23S rRNA (uracil(1939)-C(5))-methyltransferase RlmD.